Here is a 182-residue protein sequence, read N- to C-terminus: uncharacterized protein (182 aa).

Belongs to the DNA 3' phosphatase family.

This is an uncharacterized protein from Autographa californica nuclear polyhedrosis virus (AcMNPV).